The primary structure comprises 506 residues: Galactose/methyl galactoside import ATP-binding protein MglA (506 aa).

ABC transporter domains follow at residues L14 to S249 and N259 to L506. An ATP-binding site is contributed by G46 to S53.

Belongs to the ABC transporter superfamily. Galactose/methyl galactoside importer (TC 3.A.1.2.3) family. The complex is composed of one ATP-binding protein (MglA), two transmembrane proteins (MglC) and a solute-binding protein (MglB).

Its subcellular location is the cell inner membrane. It catalyses the reaction D-galactose(out) + ATP + H2O = D-galactose(in) + ADP + phosphate + H(+). The catalysed reaction is methyl beta-D-galactoside(out) + ATP + H2O = methyl beta-D-galactoside(in) + ADP + phosphate + H(+). Stimulated 3-fold by galactose and inhibited by vanadate, N-ethylmaleimide, and 5-methoxyindole-2-carboxylic acid. Part of the ABC transporter complex MglABC involved in galactose/methyl galactoside import. Responsible for energy coupling to the transport system. In Salmonella typhimurium (strain LT2 / SGSC1412 / ATCC 700720), this protein is Galactose/methyl galactoside import ATP-binding protein MglA.